A 125-amino-acid chain; its full sequence is MEAALAIATLVLVLVLCLAGVTAVSMQVRCIDAAREAARLAARGDVRSATDVARSIAPRAALVQVHRDGEFVVATVTAHSNLLPTLDIAARAISVAEPGSTAARPPCLPSRWSRCCCASPVRVHI.

An N-terminal signal peptide occupies residues 1–33; sequence MEAALAIATLVLVLVLCLAGVTAVSMQVRCIDA.

As to quaternary structure, interacts with human E3 ubiquitin-protein ligase RNF213.

It localises to the secreted. It is found in the host cytoplasm. Functionally, effector protein that participates in the suppression of macrophage apoptosis by blocking the extrinsic pathway. Interferes with caspase-8 activation and binds to the host E3 ubiquitin-protein ligase RNF213, whose fusion partners have anti-apoptotic function. This is Apoptosis inhibitor Rv3655c from Mycobacterium tuberculosis (strain ATCC 25618 / H37Rv).